Reading from the N-terminus, the 346-residue chain is tRNA N6-adenosine threonylcarbamoyltransferase (346 aa).

Fe cation contacts are provided by His-111 and His-115. Residues Leu-134–Gly-138, Asp-167, Gly-180, and Asn-277 contribute to the substrate site. Position 305 (Asp-305) interacts with Fe cation.

This sequence belongs to the KAE1 / TsaD family. It depends on Fe(2+) as a cofactor.

Its subcellular location is the cytoplasm. The enzyme catalyses L-threonylcarbamoyladenylate + adenosine(37) in tRNA = N(6)-L-threonylcarbamoyladenosine(37) in tRNA + AMP + H(+). In terms of biological role, required for the formation of a threonylcarbamoyl group on adenosine at position 37 (t(6)A37) in tRNAs that read codons beginning with adenine. Is involved in the transfer of the threonylcarbamoyl moiety of threonylcarbamoyl-AMP (TC-AMP) to the N6 group of A37, together with TsaE and TsaB. TsaD likely plays a direct catalytic role in this reaction. The sequence is that of tRNA N6-adenosine threonylcarbamoyltransferase from Bordetella bronchiseptica (strain ATCC BAA-588 / NCTC 13252 / RB50) (Alcaligenes bronchisepticus).